Reading from the N-terminus, the 339-residue chain is MLNKRAQILLKTLVERYISEGQPVGSRSLSKFSGLDLSAATIRNVMADLEDMGLVASPHASAGRIPTHQGYRFFVDTLLVVKPLDVIEIHQLQDQLHPDNPSRLINSASQLLAELTRFAGVVVSPKRNSAIFRYIEFMSLSEKRVLLIIVTPEGDVQNRVLFTDRNYSQSELTEAANFINHNYAGCAIDEIRTRLQSELKQLRQDMTSLMTAAIDAGDAAIRENSEAVIVAGERKLLDVQDLSSNMASLKKLFDLFERKTALLQLLEFSRKAEGVQIFIGEECGVVTMDEFSVVTAPYRVDGKMVGTVAVIGPTRMAYERVIPVVDMTARLLSSALSLH.

The protein belongs to the HrcA family.

Negative regulator of class I heat shock genes (grpE-dnaK-dnaJ and groELS operons). Prevents heat-shock induction of these operons. This Nitrosospira multiformis (strain ATCC 25196 / NCIMB 11849 / C 71) protein is Heat-inducible transcription repressor HrcA.